Reading from the N-terminus, the 27-residue chain is AnmTX Sco 9a-1 (27 aa).

At proline 6 the chain carries Hydroxyproline. 2 cysteine pairs are disulfide-bonded: cysteine 7/cysteine 18 and cysteine 10/cysteine 25.

Its function is as follows. Has analgesic and anti-inflammatory activity in vivo. At a dose of 0.1 and 1 mg/kg, exhibits anti-inflammatory activity by reducing the volume of edema during 24 h better than the nonsteroidal anti-inflammatory drug, Diclofenac, at dose of 1 mg/kg in a mouse model of acute local lambda-carrageenan-induced inflammation. At a dose of 1 mg/kg, reduces the content of tumor necrosis factor-alpha (TNF-alpha). Demonstrates a significant analgesic effect on acute pain sensitivity in the carrageenan-induced thermal hyperalgesia model at doses of 0.1 and 1 mg/kg. Not toxic in mice, however stimulates exploratory motivation and active search behavior, and demonstrates an anti-anxiety effect. Does not exhibit any effect on currents of rat acid-sensing ion channels ASIC1a or ASIC3. The chain is AnmTX Sco 9a-1 from Stomphia coccinea (Spotted swimming anemone).